We begin with the raw amino-acid sequence, 321 residues long: tRNA-5-methyluridine(54) 2-sulfurtransferase (321 aa).

Residues Cys3, Cys6, Cys22, and His25 each contribute to the Zn(2+) site. ATP contacts are provided by residues 53–55, Asp59, and Ile79; that span reads AVS. Cys130 and Cys133 together coordinate [4Fe-4S] cluster. Residue Lys137 forms a Glycyl lysine isopeptide (Lys-Gly) (interchain with G-Cter in TtuB) linkage. The ATP site is built by Gly156 and Asp161. Residue Cys222 participates in [4Fe-4S] cluster binding. Glycyl lysine isopeptide (Lys-Gly) (interchain with G-Cter in TtuB) cross-links involve residues Lys226 and Lys229. The Zn(2+) site is built by Cys274, Cys277, Cys286, and Cys289.

The protein belongs to the TtcA family. TtuA subfamily. As to quaternary structure, homodimer. Is able to form a heterocomplex with TtuB. [4Fe-4S] cluster serves as cofactor. Requires Mg(2+) as cofactor. Conjugated to TtuB via covalent linkages involving Lys-137, Lys-226 and Lys-229.

It catalyses the reaction [TtuB sulfur-carrier protein]-C-terminal-Gly-aminoethanethioate + 5-methyluridine(54) in tRNA + ATP + H2O = [TtuB sulfur-carrier protein]-C-terminal Gly-Gly + 5-methyl-2-thiouridine(54) in tRNA + AMP + diphosphate + H(+). Its pathway is tRNA modification. Enzymatic activity may be regulated by TtuB conjugation. Its function is as follows. Catalyzes the ATP-dependent 2-thiolation of 5-methyluridine residue at position 54 in the T loop of tRNAs, leading to 5-methyl-2-thiouridine (m(5)s(2)U or s(2)T). This modification allows thermal stabilization of tRNAs in thermophilic microorganisms, and is required for cell growth at high temperatures. TtuA transfers the S atom from the thiocarboxylated C-terminus of TtuB to tRNA. The protein is tRNA-5-methyluridine(54) 2-sulfurtransferase of Thermus thermophilus (strain ATCC BAA-163 / DSM 7039 / HB27).